Consider the following 254-residue polypeptide: Phosphatidylglycerol--prolipoprotein diacylglyceryl transferase (254 aa).

The next 3 helical transmembrane spans lie at 11–31 (LAIR…LLLA), 49–69 (FLIA…IFEF), and 84–104 (QGGL…YIYL). Arg130 is a binding site for a 1,2-diacyl-sn-glycero-3-phospho-(1'-sn-glycerol). Transmembrane regions (helical) follow at residues 169 to 189 (PTFL…VYLL), 196 to 216 (GIVF…IEGL), and 228 to 248 (VAQL…YNII).

The protein belongs to the Lgt family.

The protein localises to the cell membrane. It carries out the reaction L-cysteinyl-[prolipoprotein] + a 1,2-diacyl-sn-glycero-3-phospho-(1'-sn-glycerol) = an S-1,2-diacyl-sn-glyceryl-L-cysteinyl-[prolipoprotein] + sn-glycerol 1-phosphate + H(+). The protein operates within protein modification; lipoprotein biosynthesis (diacylglyceryl transfer). In terms of biological role, catalyzes the transfer of the diacylglyceryl group from phosphatidylglycerol to the sulfhydryl group of the N-terminal cysteine of a prolipoprotein, the first step in the formation of mature lipoproteins. The sequence is that of Phosphatidylglycerol--prolipoprotein diacylglyceryl transferase from Clostridium botulinum (strain Loch Maree / Type A3).